A 353-amino-acid polypeptide reads, in one-letter code: Peroxisome assembly protein 12-A (353 aa).

At 1-19 (MAERGAHITTTSASDDRPS) the chain is on the peroxisomal matrix side. Residues 20–47 (IFEVVAQESLMAAARPALHHIVKVLAES) form a helical membrane-spanning segment. Over 48–51 (NPSR) the chain is Cytoplasmic. The helical transmembrane segment at 52–76 (YGTLWRWFDELYTLLDWLLQQHYLS) threads the bilayer. The Peroxisomal matrix portion of the chain corresponds to 77–104 (WASASFSENFYGLKRITLGKEVGQRNLP). Residues 105 to 134 (RKEYWKSLLLLVLIPYLRVKLEKIVNRLRE) form a helical membrane-spanning segment. Topologically, residues 135–139 (EQDYS) are cytoplasmic. A helical transmembrane segment spans residues 140-178 (IQNPTSFHKRCYKAILASYPFVKLGWEAWFLFYQLRYIL). The Peroxisomal matrix portion of the chain corresponds to 179–243 (WNGKNHSPLL…LGAVALSVSS (65 aa)). Residues 244–271 (SLSLGVFFLQFLDWWYSAENQETLKSLN) form a helical membrane-spanning segment. Residues 272-353 (NLPVPPPPIH…HLIKLYTPDG (82 aa)) lie on the Cytoplasmic side of the membrane. Zn(2+) is bound by residues C298, C301, C319, and C322. Residues 298-337 (CPLCRKVRVNDTALGTSGYVFCYRCAYYYVKTHQRCPVSG) form an RING-type; degenerate zinc finger.

The protein belongs to the pex2/pex10/pex12 family. As to quaternary structure, component of the PEX2-PEX10-PEX12 retrotranslocation channel.

The protein resides in the peroxisome membrane. The protein operates within protein modification; protein ubiquitination. In terms of biological role, component of a retrotranslocation channel required for peroxisome organization by mediating export of the PEX5 receptor from peroxisomes to the cytosol, thereby promoting PEX5 recycling. The retrotranslocation channel is composed of PEX2, PEX10 and PEX12; each subunit contributing transmembrane segments that coassemble into an open channel that specifically allows the passage of PEX5 through the peroxisomal membrane. PEX12 also regulates PEX5 recycling by activating the E3 ubiquitin-protein ligase activity of PEX10. When PEX5 recycling is compromised, PEX12 stimulates PEX10-mediated polyubiquitination of PEX5, leading to its subsequent degradation. The protein is Peroxisome assembly protein 12-A of Xenopus laevis (African clawed frog).